A 178-amino-acid polypeptide reads, in one-letter code: Large ribosomal subunit protein uL6 (178 aa).

The protein belongs to the universal ribosomal protein uL6 family. As to quaternary structure, part of the 50S ribosomal subunit.

This protein binds to the 23S rRNA, and is important in its secondary structure. It is located near the subunit interface in the base of the L7/L12 stalk, and near the tRNA binding site of the peptidyltransferase center. In Helicobacter pylori (strain Shi470), this protein is Large ribosomal subunit protein uL6.